The following is a 161-amino-acid chain: Cell division protein SepF 2 (161 aa).

The segment at 19-47 is disordered; the sequence is EDSEKAPELSSSRETKTKNQNQSKSLLRS. Residues 21-35 show a composition bias toward basic and acidic residues; the sequence is SEKAPELSSSRETKT.

Belongs to the SepF family. As to quaternary structure, homodimer. Interacts with FtsZ.

It localises to the cytoplasm. Cell division protein that is part of the divisome complex and is recruited early to the Z-ring. Probably stimulates Z-ring formation, perhaps through the cross-linking of FtsZ protofilaments. Its function overlaps with FtsA. The polypeptide is Cell division protein SepF 2 (Desulforamulus reducens (strain ATCC BAA-1160 / DSM 100696 / MI-1) (Desulfotomaculum reducens)).